A 31-amino-acid polypeptide reads, in one-letter code: Branched-chain-amino-acid aminotransferase, mitochondrial (31 aa).

The transit peptide at 1–27 (MAAAALRQIWARKFLPVPWLLCGPRRY) directs the protein to the mitochondrion.

This sequence belongs to the class-IV pyridoxal-phosphate-dependent aminotransferase family. Homodimer. Requires pyridoxal 5'-phosphate as cofactor.

The protein localises to the mitochondrion. The catalysed reaction is L-leucine + 2-oxoglutarate = 4-methyl-2-oxopentanoate + L-glutamate. It catalyses the reaction L-isoleucine + 2-oxoglutarate = (S)-3-methyl-2-oxopentanoate + L-glutamate. The enzyme catalyses L-valine + 2-oxoglutarate = 3-methyl-2-oxobutanoate + L-glutamate. Functionally, catalyzes the first reaction in the catabolism of the essential branched chain amino acids leucine, isoleucine, and valine. May also function as a transporter of branched chain alpha-keto acids. The chain is Branched-chain-amino-acid aminotransferase, mitochondrial (BCAT2) from Sus scrofa (Pig).